The primary structure comprises 76 residues: ATP synthase subunit 9, mitochondrial (76 aa).

Met1 bears the N-formylmethionine mark. 2 helical membrane-spanning segments follow: residues 14–34 and 52–72; these read IATI…AALI and ILGF…SFLL.

In terms of assembly, F-type ATP synthases have 2 components, the catalytic core F(1) and the membrane-embedded component F(0), linked together by a central stalk and a peripheral stalk. The central stalk, also called rotor shaft, is often seen as part of F(1). The peripheral stalk is seen as part of F(0). F(0) contains the membrane channel next to the rotor. F-type ATP synthases form dimers but each monomer functions independently in ATP generation. The dimer consists of 18 different polypeptides: ATP1 (subunit alpha, part of F(1), 3 molecules per monomer), ATP2 (subunit beta, part of F(1), 3 molecules per monomer), ATP3 (subunit gamma, part of the central stalk), ATP4 (subunit b, part of the peripheral stalk), ATP5/OSCP (subunit 5/OSCP, part of the peripheral stalk), ATP6 (subunit a, part of the peripheral stalk), ATP7 (subunit d, part of the peripheral stalk), ATP8 (subunit 8, part of the peripheral stalk), OLI1 (subunit c, part of the rotor, 10 molecules per monomer), ATP14 (subunit h, part of the peripheral stalk), ATP15 (subunit epsilon, part of the central stalk), ATP16 (subunit delta, part of the central stalk), ATP17 (subunit f, part of the peripheral stalk), ATP18 (subunit i/j, part of the peripheral stalk). Dimer-specific subunits are ATP19 (subunit k, at interface between monomers), ATP20 (subunit g, at interface between monomers), TIM11 (subunit e, at interface between monomers). Also contains subunit L.

The protein resides in the mitochondrion inner membrane. Its function is as follows. Mitochondrial membrane ATP synthase (F(1)F(0) ATP synthase or Complex V) produces ATP from ADP in the presence of a proton gradient across the membrane which is generated by electron transport complexes of the respiratory chain. F-type ATP synthases consist of two structural domains, F(1) - containing the extramembraneous catalytic core, and F(0) - containing the membrane proton channel, linked together by a central stalk and a peripheral stalk. During catalysis, ATP synthesis in the catalytic domain of F(1) is coupled via a rotary mechanism of the central stalk subunits to proton translocation. Part of the complex F(0) domain. A homomeric c-ring of 10 OLI1/ATP9 subunits is part of the complex rotary element. The protein is ATP synthase subunit 9, mitochondrial of Pichia angusta (Yeast).